The primary structure comprises 300 residues: Epimerase family protein SAV0769 (300 aa).

Belongs to the NAD(P)-dependent epimerase/dehydratase family. SDR39U1 subfamily.

This is Epimerase family protein SAV0769 from Staphylococcus aureus (strain Mu50 / ATCC 700699).